Here is a 467-residue protein sequence, read N- to C-terminus: tRNA-2-methylthio-N(6)-dimethylallyladenosine synthase (467 aa).

Positions 15-135 constitute an MTTase N-terminal domain; that stretch reads KKIFVKTYGC…LPEYVARLAN (121 aa). The [4Fe-4S] cluster site is built by Cys24, Cys60, Cys98, Cys177, Cys181, and Cys184. Residues 163–395 form the Radical SAM core domain; the sequence is LARGATAFLT…QALLGEQQLA (233 aa). The TRAM domain maps to 398–461; sequence AGCAGRTMPV…RNSLRGRLRE (64 aa).

Belongs to the methylthiotransferase family. MiaB subfamily. Monomer. [4Fe-4S] cluster is required as a cofactor.

Its subcellular location is the cytoplasm. It catalyses the reaction N(6)-dimethylallyladenosine(37) in tRNA + (sulfur carrier)-SH + AH2 + 2 S-adenosyl-L-methionine = 2-methylsulfanyl-N(6)-dimethylallyladenosine(37) in tRNA + (sulfur carrier)-H + 5'-deoxyadenosine + L-methionine + A + S-adenosyl-L-homocysteine + 2 H(+). In terms of biological role, catalyzes the methylthiolation of N6-(dimethylallyl)adenosine (i(6)A), leading to the formation of 2-methylthio-N6-(dimethylallyl)adenosine (ms(2)i(6)A) at position 37 in tRNAs that read codons beginning with uridine. This Parvibaculum lavamentivorans (strain DS-1 / DSM 13023 / NCIMB 13966) protein is tRNA-2-methylthio-N(6)-dimethylallyladenosine synthase.